The chain runs to 638 residues: DNA gyrase subunit B (638 aa).

Residues 422–536 form the Toprim domain; the sequence is SELYIVEGDS…NGYVYIAQPP (115 aa). The Mg(2+) site is built by E428, D501, and D503.

Belongs to the type II topoisomerase GyrB family. In terms of assembly, heterotetramer, composed of two GyrA and two GyrB chains. In the heterotetramer, GyrA contains the active site tyrosine that forms a transient covalent intermediate with DNA, while GyrB binds cofactors and catalyzes ATP hydrolysis. It depends on Mg(2+) as a cofactor. Requires Mn(2+) as cofactor. Ca(2+) serves as cofactor.

The protein resides in the cytoplasm. It catalyses the reaction ATP-dependent breakage, passage and rejoining of double-stranded DNA.. Functionally, a type II topoisomerase that negatively supercoils closed circular double-stranded (ds) DNA in an ATP-dependent manner to modulate DNA topology and maintain chromosomes in an underwound state. Negative supercoiling favors strand separation, and DNA replication, transcription, recombination and repair, all of which involve strand separation. Also able to catalyze the interconversion of other topological isomers of dsDNA rings, including catenanes and knotted rings. Type II topoisomerases break and join 2 DNA strands simultaneously in an ATP-dependent manner. The protein is DNA gyrase subunit B of Bacillus subtilis (strain 168).